A 216-amino-acid polypeptide reads, in one-letter code: GTP cyclohydrolase 1 (216 aa).

Residues Cys-108, His-111, and Cys-179 each coordinate Zn(2+).

This sequence belongs to the GTP cyclohydrolase I family. As to quaternary structure, toroid-shaped homodecamer, composed of two pentamers of five dimers.

It catalyses the reaction GTP + H2O = 7,8-dihydroneopterin 3'-triphosphate + formate + H(+). It functions in the pathway cofactor biosynthesis; 7,8-dihydroneopterin triphosphate biosynthesis; 7,8-dihydroneopterin triphosphate from GTP: step 1/1. This Shewanella sp. (strain MR-7) protein is GTP cyclohydrolase 1.